The primary structure comprises 832 residues: Disintegrin and metalloproteinase domain-containing protein 23 (832 aa).

A compositionally biased stretch (polar residues) spans 1–10 (MKPPGSSSRQ). The interval 1–37 (MKPPGSSSRQPPLAGCSLAGASCGPQRGPAGSVPASA) is disordered. Residues 1–59 (MKPPGSSSRQPPLAGCSLAGASCGPQRGPAGSVPASAPARTPPCRLLLVLLLLPPLAAS) form the signal peptide. The segment covering 28 to 37 (GPAGSVPASA) has biased composition (low complexity). Residues 60–286 (SRPRAWGAAA…ELQWLKRRKR (227 aa)) constitute a propeptide that is removed on maturation. Asn76, Asn96, Asn100, and Asn263 each carry an N-linked (GlcNAc...) asparagine glycan. The Extracellular portion of the chain corresponds to 287-792 (AVNPSRGIFE…EGPKGPSATN (506 aa)). One can recognise a Peptidase M12B domain in the interval 299–496 (KYLELMIVND…GGGACLFNRP (198 aa)). Disulfide bonds link Cys408–Cys491, Cys450–Cys475, and Cys452–Cys459. One can recognise a Disintegrin domain in the interval 502–588 (PTECGNGYVE…QCPPNLHKQD (87 aa)). N-linked (GlcNAc...) asparagine glycans are attached at residues Asn547 and Asn548. A disulfide bridge links Cys560 with Cys580. The tract at residues 563 to 568 (AVNECD) is may bind the integrin receptor. Residues Asn664 and Asn732 are each glycosylated (N-linked (GlcNAc...) asparagine). The EGF-like domain occupies 732–769 (NMSSCPLDSKGKVCSGHGVCSNEATCICDFTWAGTDCS). 3 disulfide bridges follow: Cys736/Cys751, Cys745/Cys757, and Cys759/Cys768. A helical transmembrane segment spans residues 793–813 (LIIGSIAGAILVAAIVLGGTG). Residues 814-832 (WGFKNVKKRRFDPTQQGPI) lie on the Cytoplasmic side of the membrane.

As to quaternary structure, can bind to LGI1 and LGI4. Ligand for integrin alpha-V/beta-3. In terms of tissue distribution, highly expressed in the brain and weakly expressed in the heart. In the brain, expressed prominently in the amygdala, caudate nucleus, hypothalamus, thalamus, cerebral cortex and occipital pole.

It is found in the cell membrane. The protein localises to the secreted. In terms of biological role, may play a role in cell-cell and cell-matrix interactions. This is a non-catalytic metalloprotease-like protein. The sequence is that of Disintegrin and metalloproteinase domain-containing protein 23 (ADAM23) from Homo sapiens (Human).